We begin with the raw amino-acid sequence, 461 residues long: Ribitol-5-phosphate transferase FKTN (461 aa).

At 1-7 (MSRINKN) the chain is on the cytoplasmic side. Residues 6-27 (KNVVLALLTLTSSAFLLFQLYY) are required and sufficient for interaction with POMGNT1. The helical; Signal-anchor for type II membrane protein transmembrane segment at 8-28 (VVLALLTLTSSAFLLFQLYYY) threads the bilayer. Over 29-461 (KHYLSTRNGA…SEWDEVIQLY (433 aa)) the chain is Lumenal. N-linked (GlcNAc...) asparagine glycosylation occurs at Asn92.

This sequence belongs to the LicD transferase family. In terms of assembly, forms a complex composed of FKTN/fukutin, FKRP and RXYLT1/TMEM5. Interacts (via transmembrane domain) with POMGNT1; the interaction is direct and is required for normal POMGNT1 location in Golgi membranes. As to expression, expressed in the retina (at protein level).

Its subcellular location is the golgi apparatus membrane. The protein resides in the cytoplasm. It is found in the nucleus. The enzyme catalyses 3-O-[beta-D-GalNAc-(1-&gt;3)-beta-D-GlcNAc-(1-&gt;4)-(O-6-P-alpha-D-Man)]-Thr-[protein] + CDP-L-ribitol = 3-O-[Rib-ol-P-3-beta-D-GalNAc-(1-&gt;3)-beta-D-GlcNAc-(1-&gt;4)-(O-6-P-alpha-D-Man)]-Thr-[protein] + CMP + H(+). Its pathway is protein modification; protein glycosylation. Catalyzes the transfer of CDP-ribitol to the distal N-acetylgalactosamine of the phosphorylated O-mannosyl trisaccharide (N-acetylgalactosamine-beta-3-N-acetylglucosamine-beta-4-(phosphate-6-)mannose), a carbohydrate structure present in alpha-dystroglycan (DAG1). This constitutes the first step in the formation of the ribitol 5-phosphate tandem repeat which links the phosphorylated O-mannosyl trisaccharide to the ligand binding moiety composed of repeats of 3-xylosyl-alpha-1,3-glucuronic acid-beta-1. May interact with and reinforce a large complex encompassing the outside and inside of muscle membranes. Could be involved in brain development. This chain is Ribitol-5-phosphate transferase FKTN, found in Macaca fascicularis (Crab-eating macaque).